A 92-amino-acid chain; its full sequence is Small ribosomal subunit protein bS18 (92 aa).

Belongs to the bacterial ribosomal protein bS18 family. Part of the 30S ribosomal subunit. Forms a tight heterodimer with protein bS6.

Binds as a heterodimer with protein bS6 to the central domain of the 16S rRNA, where it helps stabilize the platform of the 30S subunit. In Caulobacter sp. (strain K31), this protein is Small ribosomal subunit protein bS18.